The following is an 832-amino-acid chain: pre-rRNA 2'-O-ribose RNA methyltransferase FTSJ3 (832 aa).

S-adenosyl-L-methionine is bound by residues glycine 56, tryptophan 58, aspartate 76, aspartate 92, and aspartate 117. Lysine 157 acts as the Proton acceptor in catalysis. Disordered regions lie at residues 332-358 (INLSSGEEEEGREEEEKTSPKAAADEM), 485-523 (RLERERREQGVKRVKPKVEEEEEEEEEEENPLLVPLEEK), and 546-631 (DADE…GLVE). 2 stretches are compositionally biased toward basic and acidic residues: residues 345-358 (EEEKTSPKAAADEM) and 485-495 (RLERERREQGV). Over residues 503–514 (EEEEEEEEEEEN) the composition is skewed to acidic residues. The segment covering 570–579 (KTKKKGQKKK) has biased composition (basic residues). A compositionally biased stretch (acidic residues) spans 600–618 (AEAEAEQSSDDDSSSDEEG). Residues 726–758 (IKKVAEAKARKKRRMLKKMEQMKKKAEAVVSTV) adopt a coiled-coil conformation. The segment at 795–832 (GPRVRRPPGVKGQFKVVDSRLKKDVRAQKRKEQKKRRK) is disordered. A compositionally biased stretch (basic and acidic residues) spans 811-821 (VDSRLKKDVRA). Residues 822-832 (QKRKEQKKRRK) show a composition bias toward basic residues.

It belongs to the class I-like SAM-binding methyltransferase superfamily. RNA methyltransferase RlmE family. SPB1 subfamily. In terms of assembly, interacts with NIP7.

The protein localises to the nucleus. Its subcellular location is the nucleolus. The enzyme catalyses a ribonucleotide in rRNA + S-adenosyl-L-methionine = a 2'-O-methylribonucleotide in rRNA + S-adenosyl-L-homocysteine + H(+). Functionally, RNA 2'-O-methyltransferase involved in the processing of the 34S pre-rRNA to 18S rRNA and in 40S ribosomal subunit formation. The polypeptide is pre-rRNA 2'-O-ribose RNA methyltransferase FTSJ3 (Gallus gallus (Chicken)).